Reading from the N-terminus, the 504-residue chain is Probable alpha-L-arabinofuranosidase C (504 aa).

N-linked (GlcNAc...) asparagine glycosylation is found at Asn-152, Asn-181, Asn-269, and Asn-467.

Belongs to the glycosyl hydrolase 51 family.

It localises to the secreted. It catalyses the reaction Hydrolysis of terminal non-reducing alpha-L-arabinofuranoside residues in alpha-L-arabinosides.. It functions in the pathway glycan metabolism; L-arabinan degradation. Functionally, alpha-L-arabinofuranosidase involved in the degradation of arabinoxylan, a major component of plant hemicellulose. Acts only on small linear 1,5-alpha-linked L-arabinofuranosyl oligosaccharides. This is Probable alpha-L-arabinofuranosidase C (abfC) from Aspergillus terreus (strain NIH 2624 / FGSC A1156).